A 1598-amino-acid chain; its full sequence is Pentafunctional AROM polypeptide (1598 aa).

A 3-dehydroquinate synthase region spans residues 1–384 (MGVPTKISIL…YEPRASTVSN (384 aa)). Residues 44–46 (DTN), 81–84 (ESSK), 114–116 (GGV), and Asp119 contribute to the NAD(+) site. Arg130 contributes to the 7-phospho-2-dehydro-3-deoxy-D-arabino-heptonate binding site. 139–140 (TT) provides a ligand contact to NAD(+). Residues Asp146 and Lys152 each coordinate 7-phospho-2-dehydro-3-deoxy-D-arabino-heptonate. An NAD(+)-binding site is contributed by Lys161. Asn162 lines the 7-phospho-2-dehydro-3-deoxy-D-arabino-heptonate pocket. NAD(+) contacts are provided by residues 179 to 182 (FLNT) and Asn190. Glu194 lines the Zn(2+) pocket. Residues 194-197 (EVIK) and Lys250 each bind 7-phospho-2-dehydro-3-deoxy-D-arabino-heptonate. Glu260 functions as the Proton acceptor; for 3-dehydroquinate synthase activity in the catalytic mechanism. Residues 264–268 (RNLLN) and His271 each bind 7-phospho-2-dehydro-3-deoxy-D-arabino-heptonate. Position 271 (His271) interacts with Zn(2+). His275 serves as the catalytic Proton acceptor; for 3-dehydroquinate synthase activity. 2 residues coordinate 7-phospho-2-dehydro-3-deoxy-D-arabino-heptonate: His287 and Lys356. His287 serves as a coordination point for Zn(2+). The EPSP synthase stretch occupies residues 397-842 (VYPGFPKSLN…WNTLAQTFKV (446 aa)). Cys824 functions as the For EPSP synthase activity in the catalytic mechanism. Residues 867-1059 (AASIFIIGMR…RRKENTFFVS (193 aa)) form a shikimate kinase region. Residue 874–881 (GMRGAGKT) coordinates ATP. The segment at 1060-1280 (LTFPDLTPAS…AAPGQLSARE (221 aa)) is 3-dehydroquinase. Catalysis depends on His1183, which acts as the Proton acceptor; for 3-dehydroquinate dehydratase activity. Lys1211 serves as the catalytic Schiff-base intermediate with substrate; for 3-dehydroquinate dehydratase activity. The interval 1293-1598 (AKKFAVIGKP…GVSSSDDTIS (306 aa)) is shikimate dehydrogenase.

This sequence in the N-terminal section; belongs to the sugar phosphate cyclases superfamily. Dehydroquinate synthase family. In the 2nd section; belongs to the EPSP synthase family. The protein in the 3rd section; belongs to the shikimate kinase family. It in the 4th section; belongs to the type-I 3-dehydroquinase family. This sequence in the C-terminal section; belongs to the shikimate dehydrogenase family. As to quaternary structure, homodimer. The cofactor is Zn(2+).

It localises to the cytoplasm. It carries out the reaction 7-phospho-2-dehydro-3-deoxy-D-arabino-heptonate = 3-dehydroquinate + phosphate. It catalyses the reaction 3-dehydroquinate = 3-dehydroshikimate + H2O. The enzyme catalyses shikimate + NADP(+) = 3-dehydroshikimate + NADPH + H(+). The catalysed reaction is shikimate + ATP = 3-phosphoshikimate + ADP + H(+). It carries out the reaction 3-phosphoshikimate + phosphoenolpyruvate = 5-O-(1-carboxyvinyl)-3-phosphoshikimate + phosphate. It functions in the pathway metabolic intermediate biosynthesis; chorismate biosynthesis; chorismate from D-erythrose 4-phosphate and phosphoenolpyruvate: step 2/7. It participates in metabolic intermediate biosynthesis; chorismate biosynthesis; chorismate from D-erythrose 4-phosphate and phosphoenolpyruvate: step 3/7. Its pathway is metabolic intermediate biosynthesis; chorismate biosynthesis; chorismate from D-erythrose 4-phosphate and phosphoenolpyruvate: step 4/7. The protein operates within metabolic intermediate biosynthesis; chorismate biosynthesis; chorismate from D-erythrose 4-phosphate and phosphoenolpyruvate: step 5/7. It functions in the pathway metabolic intermediate biosynthesis; chorismate biosynthesis; chorismate from D-erythrose 4-phosphate and phosphoenolpyruvate: step 6/7. Its function is as follows. The AROM polypeptide catalyzes 5 consecutive enzymatic reactions in prechorismate polyaromatic amino acid biosynthesis. This chain is Pentafunctional AROM polypeptide, found in Paracoccidioides brasiliensis (strain Pb18).